We begin with the raw amino-acid sequence, 249 residues long: 5'-nucleotidase SurE (249 aa).

The a divalent metal cation site is built by aspartate 9, aspartate 10, serine 40, and asparagine 92.

Belongs to the SurE nucleotidase family. Requires a divalent metal cation as cofactor.

It localises to the cytoplasm. The enzyme catalyses a ribonucleoside 5'-phosphate + H2O = a ribonucleoside + phosphate. Functionally, nucleotidase that shows phosphatase activity on nucleoside 5'-monophosphates. The sequence is that of 5'-nucleotidase SurE from Shewanella sp. (strain MR-4).